A 142-amino-acid polypeptide reads, in one-letter code: Large ribosomal subunit protein uL11 (142 aa).

Belongs to the universal ribosomal protein uL11 family. Part of the ribosomal stalk of the 50S ribosomal subunit. Interacts with L10 and the large rRNA to form the base of the stalk. L10 forms an elongated spine to which L12 dimers bind in a sequential fashion forming a multimeric L10(L12)X complex. In terms of processing, one or more lysine residues are methylated.

Forms part of the ribosomal stalk which helps the ribosome interact with GTP-bound translation factors. This is Large ribosomal subunit protein uL11 from Beijerinckia indica subsp. indica (strain ATCC 9039 / DSM 1715 / NCIMB 8712).